A 301-amino-acid chain; its full sequence is 4-hydroxy-tetrahydrodipicolinate synthase (301 aa).

Threonine 50 is a binding site for pyruvate. Residue tyrosine 138 is the Proton donor/acceptor of the active site. Lysine 167 (schiff-base intermediate with substrate) is an active-site residue. Isoleucine 209 contributes to the pyruvate binding site.

Belongs to the DapA family. As to quaternary structure, homotetramer; dimer of dimers.

Its subcellular location is the cytoplasm. It carries out the reaction L-aspartate 4-semialdehyde + pyruvate = (2S,4S)-4-hydroxy-2,3,4,5-tetrahydrodipicolinate + H2O + H(+). The protein operates within amino-acid biosynthesis; L-lysine biosynthesis via DAP pathway; (S)-tetrahydrodipicolinate from L-aspartate: step 3/4. Catalyzes the condensation of (S)-aspartate-beta-semialdehyde [(S)-ASA] and pyruvate to 4-hydroxy-tetrahydrodipicolinate (HTPA). This chain is 4-hydroxy-tetrahydrodipicolinate synthase, found in Sorangium cellulosum (strain So ce56) (Polyangium cellulosum (strain So ce56)).